Here is a 362-residue protein sequence, read N- to C-terminus: Histidinol-phosphate aminotransferase (362 aa).

Residue Lys218 is modified to N6-(pyridoxal phosphate)lysine.

The protein belongs to the class-II pyridoxal-phosphate-dependent aminotransferase family. Histidinol-phosphate aminotransferase subfamily. As to quaternary structure, homodimer. The cofactor is pyridoxal 5'-phosphate.

The enzyme catalyses L-histidinol phosphate + 2-oxoglutarate = 3-(imidazol-4-yl)-2-oxopropyl phosphate + L-glutamate. Its pathway is amino-acid biosynthesis; L-histidine biosynthesis; L-histidine from 5-phospho-alpha-D-ribose 1-diphosphate: step 7/9. The sequence is that of Histidinol-phosphate aminotransferase from Xanthomonas campestris pv. campestris (strain ATCC 33913 / DSM 3586 / NCPPB 528 / LMG 568 / P 25).